A 1243-amino-acid polypeptide reads, in one-letter code: DNA polymerase II large subunit (1243 aa).

This sequence belongs to the archaeal DNA polymerase II family. Heterodimer of a large subunit and a small subunit.

The enzyme catalyses DNA(n) + a 2'-deoxyribonucleoside 5'-triphosphate = DNA(n+1) + diphosphate. It carries out the reaction Exonucleolytic cleavage in the 3'- to 5'-direction to yield nucleoside 5'-phosphates.. Functionally, possesses two activities: a DNA synthesis (polymerase) and an exonucleolytic activity that degrades single-stranded DNA in the 3'- to 5'-direction. Has a template-primer preference which is characteristic of a replicative DNA polymerase. This is DNA polymerase II large subunit from Nanoarchaeum equitans (strain Kin4-M).